A 304-amino-acid polypeptide reads, in one-letter code: MGSMSEHIPATNSTGTTRVKRGLADMLKGGVIMDVVTPEQAKIAEDAGACAVMALERVPADIRAQGGVARMSDPDLIEGIIEAVSIPVMAKARIGHFVEAQVLESLRVDFIDESEVLSPADYANHIDKWAFGVPFVCGATNLGEALRRITEGAAMIRSKGEAGTGDVSEAVRHLRTIRAEMARLSSMSPDELYVAAKELQAPYDLVAEVARTGELPVVLFVAGGVATPADAALVMQMGAQGVFVGSGIFKSGNPAARAAAIVKATTAYDDPDTIAEVSRGLGEAMVGINVADVPAPHRLAERGW.

Asp-34 is a binding site for D-ribose 5-phosphate. The Schiff-base intermediate with D-ribose 5-phosphate role is filled by Lys-91. Gly-163 is a D-ribose 5-phosphate binding site. D-glyceraldehyde 3-phosphate is bound at residue Arg-175. Residues Gly-224 and 245–246 (GS) each bind D-ribose 5-phosphate.

It belongs to the PdxS/SNZ family. As to quaternary structure, in the presence of PdxT, forms a dodecamer of heterodimers.

The enzyme catalyses aldehydo-D-ribose 5-phosphate + D-glyceraldehyde 3-phosphate + L-glutamine = pyridoxal 5'-phosphate + L-glutamate + phosphate + 3 H2O + H(+). It functions in the pathway cofactor biosynthesis; pyridoxal 5'-phosphate biosynthesis. Functionally, catalyzes the formation of pyridoxal 5'-phosphate from ribose 5-phosphate (RBP), glyceraldehyde 3-phosphate (G3P) and ammonia. The ammonia is provided by the PdxT subunit. Can also use ribulose 5-phosphate and dihydroxyacetone phosphate as substrates, resulting from enzyme-catalyzed isomerization of RBP and G3P, respectively. In Cutibacterium acnes (strain DSM 16379 / KPA171202) (Propionibacterium acnes), this protein is Pyridoxal 5'-phosphate synthase subunit PdxS.